Here is a 177-residue protein sequence, read N- to C-terminus: Novel acetylcholine receptor chaperone (177 aa).

The Cytoplasmic portion of the chain corresponds to 1 to 5 (MASPR). The chain crosses the membrane as a helical span at residues 6-26 (TVTVVALSVALGLFFVFMGTI). Residues 27–61 (KLTPRLSKDAYSEMKRAYKSYVRALPLLKKMGINS) are Lumenal-facing. The tract at residues 43 to 54 (AYKSYVRALPLL) is interaction with NGFR. The chain crosses the membrane as a helical span at residues 62–82 (ILLRKSIGALEVACGIVMTLV). Residues 83 to 88 (PGRPKD) lie on the Cytoplasmic side of the membrane. A helical transmembrane segment spans residues 89–109 (VANFFLLLLVLAVLFFHQLVG). Residues 110-114 (DPLKR) lie on the Lumenal side of the membrane. A helical transmembrane segment spans residues 115 to 132 (YAHALVFGILLTCRLLIA). The Cytoplasmic segment spans residues 133 to 177 (RKPEDRSSEKKSSPPGNAGSDGNAGNTEEQPSLYEKAPQGKMKLS). The segment at 136 to 177 (EDRSSEKKSSPPGNAGSDGNAGNTEEQPSLYEKAPQGKMKLS) is disordered.

Belongs to the DoxX family. In terms of assembly, may interact with NGFR. Interacts with RPN1, RPN2 and CANX.

The protein resides in the peroxisome membrane. It localises to the cytoplasmic vesicle. It is found in the endoplasmic reticulum membrane. In terms of biological role, molecular chaperone which mediates the proper assembly and functional expression of the nicotinic acetylcholine receptors (nAChRs) throughout the brain. Essential for the proper folding, assembly, function and surface trafficking of alpha-7 (CHRNA7), alpha-4-beta-2, alpha-3-beta-2 and alpha-3-beta-4 receptors. Stably associates with ribophorin-1 (RPN1) and ribophorin-2 (RPN2) (components of the oligosaccharyl transferase (OST) complex) and with calnexin (CANX), both of which are critical for NACHO-mediated effects on CHRNA7 assembly and function. Facilitates the proper folding and assembly of alpha-6-beta-2 and alpha-6-beta-2-beta-3 receptors and acts at early stages of the nAChRs subunit assembly. Promotes the expression of the alpha-4(2):beta-2(3) stoichiometric form over the alpha-4(3):beta-2(2) form. This is Novel acetylcholine receptor chaperone (TMEM35A) from Bos taurus (Bovine).